Reading from the N-terminus, the 134-residue chain is DNA-directed RNA polymerase subunit omega (134 aa).

Residues 77–108 are disordered; the sequence is IDEPEPDPASLLAAGGNASASGDEEEDAPEAV. Over residues 85–97 the composition is skewed to low complexity; that stretch reads ASLLAAGGNASAS.

Belongs to the RNA polymerase subunit omega family. The RNAP catalytic core consists of 2 alpha, 1 beta, 1 beta' and 1 omega subunit. When a sigma factor is associated with the core the holoenzyme is formed, which can initiate transcription.

It carries out the reaction RNA(n) + a ribonucleoside 5'-triphosphate = RNA(n+1) + diphosphate. In terms of biological role, promotes RNA polymerase assembly. Latches the N- and C-terminal regions of the beta' subunit thereby facilitating its interaction with the beta and alpha subunits. The chain is DNA-directed RNA polymerase subunit omega from Rhizobium rhizogenes (strain K84 / ATCC BAA-868) (Agrobacterium radiobacter).